The primary structure comprises 109 residues: Large ribosomal subunit protein uL23 (109 aa).

The protein belongs to the universal ribosomal protein uL23 family. Part of the 50S ribosomal subunit. Contacts protein L29, and trigger factor when it is bound to the ribosome.

In terms of biological role, one of the early assembly proteins it binds 23S rRNA. One of the proteins that surrounds the polypeptide exit tunnel on the outside of the ribosome. Forms the main docking site for trigger factor binding to the ribosome. This chain is Large ribosomal subunit protein uL23, found in Chlorobium phaeobacteroides (strain BS1).